Here is a 211-residue protein sequence, read N- to C-terminus: Arginine exporter protein ArgO (211 aa).

6 helical membrane-spanning segments follow: residues 1–21 (MFSY…PLGP), 37–57 (IMIA…GIFG), 68–88 (LLAL…FGAF), 111–131 (IIAT…DTFV), 147–167 (WFAL…AILA), and 182–202 (IINL…ARDG).

Belongs to the LysE/ArgO transporter (TC 2.A.75) family.

Its subcellular location is the cell inner membrane. The enzyme catalyses L-arginine(in) = L-arginine(out). Involved in the export of arginine. Important to control the intracellular level of arginine and the correct balance between arginine and lysine. The protein is Arginine exporter protein ArgO of Escherichia coli O157:H7.